We begin with the raw amino-acid sequence, 924 residues long: Mediator of RNA polymerase II transcription subunit 16 (924 aa).

It belongs to the Mediator complex subunit 16 family. In terms of assembly, component of the Mediator complex.

It localises to the nucleus. Functionally, component of the Mediator complex, a coactivator involved in the regulated transcription of nearly all RNA polymerase II-dependent genes. Mediator functions as a bridge to convey information from gene-specific regulatory proteins to the basal RNA polymerase II transcription machinery. Mediator is recruited to promoters by direct interactions with regulatory proteins and serves as a scaffold for the assembly of a functional preinitiation complex with RNA polymerase II and the general transcription factors. The sequence is that of Mediator of RNA polymerase II transcription subunit 16 (SIN4) from Yarrowia lipolytica (strain CLIB 122 / E 150) (Yeast).